A 318-amino-acid chain; its full sequence is MSAHNRGTELDLSWISKIQVNHPAVLRRAEQIQARRTVKKEWQAAWLLKAVTFIDLTTLSGDDTSSNIQRLCYKAKYPIREDLLKALNMHDKGITTAAVCVYPARVCDAVKALKAAGCNIPVASVAAGFPAGQTHLKTRLEEIRLAVEDGATEIDVVINRSLVLTGQWEALYDEIRQFRKACGEAHLKTILATGELGTLTNVYKASMIAMMAGSDFIKTSTGKETVNATFPVAIVMLRAIRDFFWKTGNKIGFKPAGGIRSAKDSLAWLSLVKEELGDEWLKPELFRIGASTLLSDIERQIYHHVTGRYAAYHDLPMS.

Aspartate 155 functions as the Proton donor/acceptor in the catalytic mechanism. Lysine 218 functions as the Schiff-base intermediate with acetaldehyde in the catalytic mechanism. Lysine 254 functions as the Proton donor/acceptor in the catalytic mechanism.

The protein belongs to the DeoC/FbaB aldolase family. DeoC type 2 subfamily. Interacts with YBX1. In terms of tissue distribution, mainly expressed in liver, lung and colon.

It localises to the cytoplasm. The protein resides in the cytoplasmic granule. It is found in the nucleus. It catalyses the reaction 2-deoxy-D-ribose 5-phosphate = D-glyceraldehyde 3-phosphate + acetaldehyde. Its pathway is carbohydrate degradation; 2-deoxy-D-ribose 1-phosphate degradation; D-glyceraldehyde 3-phosphate and acetaldehyde from 2-deoxy-alpha-D-ribose 1-phosphate: step 2/2. Its function is as follows. Catalyzes a reversible aldol reaction between acetaldehyde and D-glyceraldehyde 3-phosphate to generate 2-deoxy-D-ribose 5-phosphate. Participates in stress granule (SG) assembly. May allow ATP production from extracellular deoxyinosine in conditions of energy deprivation. This Homo sapiens (Human) protein is Deoxyribose-phosphate aldolase (DERA).